Consider the following 228-residue polypeptide: Ribulose-phosphate 3-epimerase (228 aa).

Residue S11 participates in substrate binding. A divalent metal cation is bound by residues H36, D38, and H69. D38 (proton acceptor) is an active-site residue. Substrate-binding positions include H69, 145 to 148 (GFCG), 180 to 182 (DGG), and 202 to 203 (AS). D180 is an a divalent metal cation binding site. Residue D180 is the Proton donor of the active site.

It belongs to the ribulose-phosphate 3-epimerase family. A divalent metal cation serves as cofactor.

It carries out the reaction D-ribulose 5-phosphate = D-xylulose 5-phosphate. It participates in carbohydrate degradation. Functionally, catalyzes the reversible epimerization of D-ribulose 5-phosphate to D-xylulose 5-phosphate. The sequence is that of Ribulose-phosphate 3-epimerase from Chlamydia muridarum (strain MoPn / Nigg).